The following is a 189-amino-acid chain: Large ribosomal subunit protein uL6 (189 aa).

It belongs to the universal ribosomal protein uL6 family. In terms of assembly, part of the 50S ribosomal subunit.

This protein binds to the 23S rRNA, and is important in its secondary structure. It is located near the subunit interface in the base of the L7/L12 stalk, and near the tRNA binding site of the peptidyltransferase center. The chain is Large ribosomal subunit protein uL6 from Bacteroides fragilis (strain ATCC 25285 / DSM 2151 / CCUG 4856 / JCM 11019 / LMG 10263 / NCTC 9343 / Onslow / VPI 2553 / EN-2).